A 1163-amino-acid polypeptide reads, in one-letter code: Rho GTPase-activating protein 45 (1163 aa).

The tract at residues 1–99 (MFSRKKRELM…KRPTSLSRHA (99 aa)) is disordered. A phosphoserine mark is found at Ser23 and Ser25. The segment covering 55–65 (LPKELPRKDGA) has biased composition (basic and acidic residues). Phosphoserine is present on residues Ser100, Ser120, and Ser126. Disordered stretches follow at residues 118–137 (HRSPLTAASPGELPTEGTGP), 262–282 (PPGDSSQSMESLYGSGSEGTP), and 454–475 (EEEQAGTAPGAGSTATKTLDKR). Residues 296–566 (EEVDVLLQRC…SSKLYDPGQQ (271 aa)) enclose the F-BAR domain. Residues 403–526 (EHEKRRKEIK…QIQEVIRQSD (124 aa)) are a coiled coil. Low complexity predominate over residues 458 to 470 (AGTAPGAGSTATK). 3 positions are modified to phosphoserine: Ser596, Ser605, and Ser619. The disordered stretch occupies residues 610–695 (DVAGPEAAGS…VDPEGGAGAS (86 aa)). Positions 633–644 (KGHRAGRGHQVH) are enriched in basic residues. Position 646 is a phosphoserine (Ser646). Residues 673–682 (TSSSGTMSST) show a composition bias toward low complexity. The segment at 729-774 (THRLRKLRTPAKCRECNSYVYFQGAECEECCLACHKKCLETLAIQC) adopts a Phorbol-ester/DAG-type zinc-finger fold. A Rho-GAP domain is found at 788 to 1001 (QDFSHAARSA…TLIVHYGLVF (214 aa)). 4 positions are modified to phosphoserine: Ser976, Ser1054, Ser1057, and Ser1059. Disordered stretches follow at residues 1042 to 1067 (AAEDGCRESRVVSNDSDSDLEEASEL) and 1087 to 1163 (SEAS…PEFV). A compositionally biased stretch (low complexity) spans 1087–1099 (SEASLEEASGSHS). Residues 1125 to 1137 (SGFNTNQSNNVLQ) show a composition bias toward polar residues.

The protein localises to the cytoplasm. It localises to the cell projection. It is found in the ruffle membrane. Its function is as follows. Contains a GTPase activator for the Rho-type GTPases (RhoGAP) domain that would be able to negatively regulate the actin cytoskeleton as well as cell spreading. However, also contains N-terminally a BAR-domin which is able to play an autoinhibitory effect on this RhoGAP activity. The protein is Rho GTPase-activating protein 45 of Pongo abelii (Sumatran orangutan).